Here is a 79-residue protein sequence, read N- to C-terminus: Sec-independent protein translocase protein TatA (79 aa).

The helical transmembrane segment at methionine 1 to glycine 21 threads the bilayer. The disordered stretch occupies residues methionine 43 to alanine 79. Residues glutamate 46 to alanine 57 show a composition bias toward basic and acidic residues. A compositionally biased stretch (low complexity) spans alanine 58–alanine 67. Over residues threonine 68 to alanine 79 the composition is skewed to basic and acidic residues.

It belongs to the TatA/E family. In terms of assembly, the Tat system comprises two distinct complexes: a TatABC complex, containing multiple copies of TatA, TatB and TatC subunits, and a separate TatA complex, containing only TatA subunits. Substrates initially bind to the TatABC complex, which probably triggers association of the separate TatA complex to form the active translocon.

The protein resides in the cell inner membrane. In terms of biological role, part of the twin-arginine translocation (Tat) system that transports large folded proteins containing a characteristic twin-arginine motif in their signal peptide across membranes. TatA could form the protein-conducting channel of the Tat system. The sequence is that of Sec-independent protein translocase protein TatA from Shewanella putrefaciens (strain CN-32 / ATCC BAA-453).